The primary structure comprises 544 residues: MALSEVLSMVAQLGYYEKVTGILGVVSIILLFWKLNHEPFYPALPLAGEPPQRRWFSLSNRLRYYNDCAALFDEAYHTAYAKKGKAVLVPSMGVHTAMIMPESAMNWAMSQPDDSLSIKKAFSELNQTKYSLGHSRYWEDPWQLDLVKAHLSSILQNLIPQLNEELAAAFSKHLGTDAENWKEIELEVIMRRVIAQATSRFIVGLPLCRDDGYLDLSYKVILGMVTTIWATLPFPDLIRAVTGPLASWQTRRNISRIQEHLEPLYQERISILESRDGQKSDPGPQDLFMMMLRFAQKKRPDEYANLGIMTRRVCAANFVAMHQSTVSVTNLILNIIGSDAEFNTIATLRDEITQVMRGTDAKGCWTKDTFTRMRKCDSVAREAMRLNFPLGTRGSMRTVLKDGLESPEGIKLQKGTTISWLASCAQVDADRFDNPQKFDPFRFSRASKDDDDDDDDDGRSTSSHTKDAFVTTSPQYLPFGHGKHACPGRFMVDLMFKIILAQLLTHYDLGWPEDYQGKQPPSVWQGELSEPPPGARILVKRRKV.

The helical transmembrane segment at 13 to 33 threads the bilayer; it reads LGYYEKVTGILGVVSIILLFW. The span at 438–448 shows a compositional bias: basic and acidic residues; sequence FDPFRFSRASK. The segment at 438–467 is disordered; the sequence is FDPFRFSRASKDDDDDDDDDGRSTSSHTKD. Cysteine 486 is a heme binding site.

The protein belongs to the cytochrome P450 family. Heme is required as a cofactor.

The protein resides in the membrane. Its pathway is secondary metabolite biosynthesis. Cytochrome P450 monooxygenase; part of the gene cluster that mediates the biosynthesis of tenellin-type 2-pyridones, iron-chelating compounds involved in iron stress tolerance, competition with the natural competitor fungus Metarhizium robertsii and insect hosts infection. TenB catalyzes the selective N-hydroxylation of the 2-pyridone nitrogen of yield tellinin and 15-hydroxytellenin (15-HT), respectively. The pathway begins with the assembly of the polyketide-amino acid backbone by the hybrid PKS-NRPS tenS with the help of the enoyl reductase tenC. These enzymes catalyze the synthesis of the pyrrolidine-2-dione intermediates pretellinin A, 11-hydropretellenin A, 12-hydropretellenin A, 13-hydropretellenin A, 14-hydropretellenin A, 12-oxopretellenin A and prototellinin D. The cytochrome P450 monooxygenase tenA then catalyzes an oxidative ring expansion of pretenellin A and 14-hydropretellenin A to form the 2-pyridone core, leading to pretenellin B and pyridovericin, respectively. The cytochrome P450 monooxygenase tenB is then required for the selective N-hydroxylation of the 2-pyridone nitrogen of yield tellinin and 15-hydroxytellenin (15-HT), respectively. The UDP-glucosyltransferase GT1 and the methyltransferase MT1, located outside the tenS gene cluster, contribute to the stepwise glycosylation and methylation of 15-HT to obtain the glycoside pyridovericin-N-O-(4-O-methyl-beta-D-glucopyranoside) (PMGP). Additional related compounds such as 1-O-methyl-15-HT, (8Z)-1-O-methyl-15-HT, and O-methyltenellin A are also produced but the enzymes involved in their biosynthesis have still to be determined. In Beauveria bassiana (strain ARSEF 2860) (White muscardine disease fungus), this protein is Cytochrome P450 monooxygenase tenB.